The primary structure comprises 262 residues: MQVDLLSSAQSAHALHLFHQHSPLVHCMTNDVVQTFTANTLLALGASPAMVIETEEASQFAAIASALLINVGTLTQPRAQAMSAAVEQATRSQTPWTLDPVAVGALDYRRRFCVELLSHKPTAIRGNASEIMALAGVANGGRGVDTTDAAANAIPAAQTLARETGAIVVVTGEVDYVTDGHRIIGIHGGDPLMTKVVGTGCALSAVVAACCALPGDTLENIASACHWMKQAGERAVARSEGPGSFVPHFLDALWQLAQEVQA.

Position 50 (M50) interacts with substrate. ATP contacts are provided by R125 and T171. Position 198 (G198) interacts with substrate.

It belongs to the Thz kinase family. It depends on Mg(2+) as a cofactor.

The enzyme catalyses 5-(2-hydroxyethyl)-4-methylthiazole + ATP = 4-methyl-5-(2-phosphooxyethyl)-thiazole + ADP + H(+). Its pathway is cofactor biosynthesis; thiamine diphosphate biosynthesis; 4-methyl-5-(2-phosphoethyl)-thiazole from 5-(2-hydroxyethyl)-4-methylthiazole: step 1/1. Functionally, catalyzes the phosphorylation of the hydroxyl group of 4-methyl-5-beta-hydroxyethylthiazole (THZ). The protein is Hydroxyethylthiazole kinase of Escherichia coli O6:H1 (strain CFT073 / ATCC 700928 / UPEC).